The sequence spans 593 residues: Replication protein E1 (593 aa).

Positions 72 to 74 (KRK) match the Nuclear localization signal motif. Positions 86–95 (LSPRLSAVHI) match the Nuclear export signal motif. Serine 87 carries the post-translational modification Phosphoserine; by host. The segment at 134–297 (NQNGAECELN…TIVEHQLASA (164 aa)) is DNA-binding region. Positions 382–546 (EEWKEIVQFL…LPMSDKDEPL (165 aa)) constitute an SF3 helicase domain. 422–429 (GPPDTGKS) contributes to the ATP binding site. Residue lysine 503 forms a Glycyl lysine isopeptide (Lys-Gly) (interchain with G-Cter in SUMO) linkage.

This sequence belongs to the papillomaviridae E1 protein family. As to quaternary structure, can form hexamers. Interacts with E2 protein; this interaction increases E1 DNA binding specificity. Interacts with host DNA polymerase subunit POLA2. Interacts with host single stranded DNA-binding protein RPA1. Interacts with host TOP1; this interaction stimulates the enzymatic activity of TOP1. Post-translationally, phosphorylated. In terms of processing, sumoylated.

It localises to the host nucleus. It catalyses the reaction Couples ATP hydrolysis with the unwinding of duplex DNA by translocating in the 3'-5' direction.. It carries out the reaction ATP + H2O = ADP + phosphate + H(+). In terms of biological role, ATP-dependent DNA 3'-5' helicase required for initiation of viral DNA replication. It forms a complex with the viral E2 protein. The E1-E2 complex binds to the replication origin which contains binding sites for both proteins. During the initial step, a dimer of E1 interacts with a dimer of protein E2 leading to a complex that binds the viral origin of replication with high specificity. Then, a second dimer of E1 displaces the E2 dimer in an ATP-dependent manner to form the E1 tetramer. Following this, two E1 monomers are added to each half of the site, which results in the formation of two E1 trimers on the viral ori. Subsequently, two hexamers will be created. The double hexamer acts as a bi-directional helicase machinery and unwinds the viral DNA and then recruits the host DNA polymerase to start replication. In Human papillomavirus type 48, this protein is Replication protein E1.